We begin with the raw amino-acid sequence, 226 residues long: Protein AF-9 homolog (226 aa).

Residues 8–169 (RIKTLSVSRP…EEFFKILMSR (162 aa)) form the YEATS domain. Residues 187 to 224 (QLEQEEIDRIEIGIEKVDKEIDELKQKLENLVKQEAIN) are a coiled coil.

As to quaternary structure, component of the SWR1 chromatin-remodeling complex composed of at least ACT1, ARP4, RVB1, RVB2, ARP6, YAF9, VPS71, VPS72, SWC3, SWC4, SWC5, SWC7 and SWR1, and perhaps BDF1. Component of the NuA4 histone acetyltransferase complex composed of at least ACT1, ARP4, YAF9, VID21, SWC4, EAF3, EAF5, EAF6, EAF7, EPL1, ESA1, TRA1 and YNG2. Interacts with SWC4.

It is found in the cytoplasm. It localises to the nucleus. Functionally, component of the SWR1 complex which mediates the ATP-dependent exchange of histone H2A for the H2A variant HZT1 leading to transcriptional regulation of selected genes by chromatin remodeling. Component of the NuA4 histone acetyltransferase complex which is involved in transcriptional activation of selected genes principally by acetylation of nucleosomal histones H4 and H2A. The NuA4 complex is also involved in DNA repair. Yaf9 may also be required for viability in conditions in which the structural integrity of the spindle is compromised. This Saccharomyces cerevisiae (strain ATCC 204508 / S288c) (Baker's yeast) protein is Protein AF-9 homolog (YAF9).